Consider the following 258-residue polypeptide: GTP cyclohydrolase FolE2 (258 aa).

The protein belongs to the GTP cyclohydrolase IV family.

It carries out the reaction GTP + H2O = 7,8-dihydroneopterin 3'-triphosphate + formate + H(+). It participates in cofactor biosynthesis; 7,8-dihydroneopterin triphosphate biosynthesis; 7,8-dihydroneopterin triphosphate from GTP: step 1/1. Functionally, converts GTP to 7,8-dihydroneopterin triphosphate. The protein is GTP cyclohydrolase FolE2 of Lawsonia intracellularis (strain PHE/MN1-00).